The following is a 523-amino-acid chain: 3-hydroxybenzoate--CoA ligase (523 aa).

The protein belongs to the ATP-dependent AMP-binding enzyme family. Benzoate-CoA ligase subfamily.

The enzyme catalyses 3-hydroxybenzoate + ATP + CoA = 3-hydroxybenzoyl-CoA + AMP + diphosphate. The catalysed reaction is 4-hydroxybenzoate + ATP + CoA = 4-hydroxybenzoyl-CoA + AMP + diphosphate. Ligase involved in the anaerobic degradation of 3-hydroxybenzoate (3OHBz). Catalyzes the activation of 3-hydroxybenzoate to 3-hydroxybenzoyl-CoA. Also shows high activity with protocatechuate and 4-hydroxybenzoate. Exhibits lower activity with benzoate, but cannot use 2-hydroxybenzoate or benzoate analogs containing other substituents at the ortho position, such as 2-aminobenzoate (anthranilate). The sequence is that of 3-hydroxybenzoate--CoA ligase from Aromatoleum sp. (strain CIB) (Azoarcus sp. (strain CIB)).